The following is a 426-amino-acid chain: Serine--tRNA ligase (426 aa).

233 to 235 (TAE) lines the L-serine pocket. Residue 264–266 (RAE) participates in ATP binding. Glu-287 is an L-serine binding site. 351-354 (EISS) is a binding site for ATP. Ser-387 lines the L-serine pocket.

The protein belongs to the class-II aminoacyl-tRNA synthetase family. Type-1 seryl-tRNA synthetase subfamily. As to quaternary structure, homodimer. The tRNA molecule binds across the dimer.

It is found in the cytoplasm. It carries out the reaction tRNA(Ser) + L-serine + ATP = L-seryl-tRNA(Ser) + AMP + diphosphate + H(+). The enzyme catalyses tRNA(Sec) + L-serine + ATP = L-seryl-tRNA(Sec) + AMP + diphosphate + H(+). It participates in aminoacyl-tRNA biosynthesis; selenocysteinyl-tRNA(Sec) biosynthesis; L-seryl-tRNA(Sec) from L-serine and tRNA(Sec): step 1/1. Functionally, catalyzes the attachment of serine to tRNA(Ser). Is also able to aminoacylate tRNA(Sec) with serine, to form the misacylated tRNA L-seryl-tRNA(Sec), which will be further converted into selenocysteinyl-tRNA(Sec). The sequence is that of Serine--tRNA ligase from Clostridium kluyveri (strain NBRC 12016).